The primary structure comprises 452 residues: Probable V-type proton ATPase subunit H (452 aa).

This sequence belongs to the V-ATPase H subunit family. As to quaternary structure, V-ATPase is a heteromultimeric enzyme composed of a peripheral catalytic V1 complex (components A to H) attached to an integral membrane V0 proton pore complex (components: a, c, c', c'' and d).

Its function is as follows. Subunit of the peripheral V1 complex of vacuolar ATPase. Subunit H activates the ATPase activity of the enzyme and couples ATPase activity to proton flow. Vacuolar ATPase is responsible for acidifying a variety of intracellular compartments in eukaryotic cells, thus providing most of the energy required for transport processes in the vacuolar system. This Oryza sativa subsp. japonica (Rice) protein is Probable V-type proton ATPase subunit H.